The following is a 126-amino-acid chain: Fatty acid-binding protein, liver (126 aa).

N-acetylalanine is present on Ala-2.

The protein belongs to the calycin superfamily. Fatty-acid binding protein (FABP) family.

It localises to the cytoplasm. Its function is as follows. Binds free fatty acids and their coenzyme A derivatives, bilirubin, and some other small molecules in the cytoplasm. May be involved in intracellular lipid transport. The polypeptide is Fatty acid-binding protein, liver (fabp1) (Schroederichthys bivius (Narrowmouthed catshark)).